A 239-amino-acid polypeptide reads, in one-letter code: MKDDVLKQQAHAAIQKKLGYAFRDISLLRQALTHRSHHAKHNERFEFVGDSILNYTVARMLFDAFPKLTEGELSRLRASLVNEGVLAEMAAEMNVGDGLYLGAGELKSGGFRRPSILADAMEAMFAAVSFDADFNTAEKVVRHLFAERVRRVDFQNQAKDGKTALQEALQARRFALPKYRIEEQIGHANDSMFVISCDLGELGFVCRAKGTSRKAAEQEAAKEALKWLEEKLPLKKKKK.

Residues 11-133 (HAAIQKKLGY…MFAAVSFDAD (123 aa)) form the RNase III domain. Glu46 is a Mg(2+) binding site. Asp50 is a catalytic residue. Residues Asp119 and Glu122 each coordinate Mg(2+). Residue Glu122 is part of the active site. Residues 160 to 230 (DGKTALQEAL…AKEALKWLEE (71 aa)) enclose the DRBM domain.

It belongs to the ribonuclease III family. In terms of assembly, homodimer. The cofactor is Mg(2+).

The protein resides in the cytoplasm. The catalysed reaction is Endonucleolytic cleavage to 5'-phosphomonoester.. Its function is as follows. Digests double-stranded RNA. Involved in the processing of primary rRNA transcript to yield the immediate precursors to the large and small rRNAs (23S and 16S). Also processes some mRNAs, and tRNAs when they are encoded in the rRNA operon. CRISPR (clustered regularly interspaced short palindromic repeat) is an adaptive immune system that provides protection against mobile genetic elements (viruses, transposable elements and conjugative plasmids). CRISPR clusters contain spacers, sequences complementary to antecedent mobile elements, and target invading nucleic acids. CRISPR clusters are transcribed and processed into CRISPR RNA (crRNA). In this organism endogenous ribonuclease 3 and Cas9 are required for correct coprocessing of pre-crRNA and the trans-encoded small RNA (tracrRNA). Cas9, crRNA and tracrRNA are required for cleavage of invading DNA. Complements pre-crRNA and tracrRNA coprocessing defects in an rnc deletion in S.pyogenes strain 370. The chain is Ribonuclease 3 from Neisseria meningitidis serogroup A / serotype 4A (strain DSM 15465 / Z2491).